A 90-amino-acid polypeptide reads, in one-letter code: DNA-binding protein HU (90 aa).

This sequence belongs to the bacterial histone-like protein family. Homodimer.

Functionally, histone-like DNA-binding protein which is capable of wrapping DNA to stabilize it, and thus to prevent its denaturation under extreme environmental conditions. This is DNA-binding protein HU (hup) from Staphylococcus aureus (strain COL).